The chain runs to 332 residues: Twinfilin-1 (332 aa).

Residues 5 to 132 (SGIVAEQALL…VDLKNFDSAR (128 aa)) enclose the ADF-H 1 domain. A phosphoserine mark is found at S167 and S172. The ADF-H 2 domain maps to 173 to 300 (PLSLTFRVNS…DKSLLMATNK (128 aa)). A disordered region spans residues 301 to 332 (EDSLDHGSNPDLPNKSNLKFNKPKGPLRKRRT). Basic residues predominate over residues 321-332 (NKPKGPLRKRRT).

It belongs to the actin-binding proteins ADF family. Twinfilin subfamily. As to quaternary structure, interacts with G-actin; ADP-actin form.

The protein localises to the cytoplasm. It localises to the cytoskeleton. Its function is as follows. Actin-binding protein involved in motile and morphological processes. Inhibits actin polymerization, likely by sequestering G-actin. Prevents actin filament assembly by forming a 1:1 complex with actin monomers, and inhibits the nucleotide exchange reaction of actin monomers. This chain is Twinfilin-1 (TWF1), found in Saccharomyces cerevisiae (strain ATCC 204508 / S288c) (Baker's yeast).